The following is a 739-amino-acid chain: NAD(P)H-quinone oxidoreductase subunit 5, chloroplastic (739 aa).

Helical transmembrane passes span 9–29 (LIIPFALLPVPMLIGVALIFF), 40–60 (WAFPSVLLLSIVMIFSFNLSI), 89–109 (IDSLTSIMLILITTVGILVLI), 125–145 (FAYMSFSNISMLGLVTSSNLI), 147–167 (IHIFWELVGVCSYLLIGFWFT), 185–205 (GDFGLLLGILGFYWITGSFEF), 224–244 (LFVILCASLLFVGAVAKSAQF), 258–278 (TPISALIHAATMVAAGIFLVA), 283–303 (LFTVIPYIMNIISLIGIITIL), 327–347 (LGYIMLALGMGSYRAALFHLI), 354–374 (ALLFLGSGSIIHSMESIVGYS), 396–416 (TAFFLGTLSLCGIPPLACFWS), 425–445 (WLYSPIFAIIACSTAGLTAFY), 546–566 (LFPLLVLVLFTFFVGSIGIPF), 605–625 (IFSVSIAYFGIFISSFLYRPI), and 718–738 (ISSYLFLYLFSVSIFFLIFQV).

Belongs to the complex I subunit 5 family. As to quaternary structure, NDH is composed of at least 16 different subunits, 5 of which are encoded in the nucleus.

The protein resides in the plastid. Its subcellular location is the chloroplast thylakoid membrane. The enzyme catalyses a plastoquinone + NADH + (n+1) H(+)(in) = a plastoquinol + NAD(+) + n H(+)(out). It carries out the reaction a plastoquinone + NADPH + (n+1) H(+)(in) = a plastoquinol + NADP(+) + n H(+)(out). In terms of biological role, NDH shuttles electrons from NAD(P)H:plastoquinone, via FMN and iron-sulfur (Fe-S) centers, to quinones in the photosynthetic chain and possibly in a chloroplast respiratory chain. The immediate electron acceptor for the enzyme in this species is believed to be plastoquinone. Couples the redox reaction to proton translocation, and thus conserves the redox energy in a proton gradient. This is NAD(P)H-quinone oxidoreductase subunit 5, chloroplastic (ndhF) from Buxus microphylla (Littleleaf boxwood).